Reading from the N-terminus, the 477-residue chain is Glycogen synthase (477 aa).

Lysine 15 is a binding site for ADP-alpha-D-glucose.

It belongs to the glycosyltransferase 1 family. Bacterial/plant glycogen synthase subfamily.

The catalysed reaction is [(1-&gt;4)-alpha-D-glucosyl](n) + ADP-alpha-D-glucose = [(1-&gt;4)-alpha-D-glucosyl](n+1) + ADP + H(+). Its pathway is glycan biosynthesis; glycogen biosynthesis. In terms of biological role, synthesizes alpha-1,4-glucan chains using ADP-glucose. The sequence is that of Glycogen synthase (glgA) from Salmonella typhimurium (strain LT2 / SGSC1412 / ATCC 700720).